We begin with the raw amino-acid sequence, 450 residues long: ATP-dependent protease ATPase subunit HslU (450 aa).

Residues Val27, 69-74 (GVGKTE), Asp263, Glu328, and Arg400 contribute to the ATP site.

It belongs to the ClpX chaperone family. HslU subfamily. A double ring-shaped homohexamer of HslV is capped on each side by a ring-shaped HslU homohexamer. The assembly of the HslU/HslV complex is dependent on binding of ATP.

Its subcellular location is the cytoplasm. Its function is as follows. ATPase subunit of a proteasome-like degradation complex; this subunit has chaperone activity. The binding of ATP and its subsequent hydrolysis by HslU are essential for unfolding of protein substrates subsequently hydrolyzed by HslV. HslU recognizes the N-terminal part of its protein substrates and unfolds these before they are guided to HslV for hydrolysis. The chain is ATP-dependent protease ATPase subunit HslU from Aquifex aeolicus (strain VF5).